The following is a 255-amino-acid chain: SLLQGGSAYLPGRPEIQWKNLNPMQLMEELGQFTSVDGFKEMLDKADVGQAYMERPCLDPMDPQCPESAPNKQKRRVPNIAQELAGGCYGFSKRFMHWQEELILGGTVRDSQDRLLSAEALQTMFLLMSSRQLYEHFRDNYEIHDINWTEEKAAAILETWQRKFVELAQQSAPENSSQIIHAFSTTTLNDIMKSFSDVSVIRVAGGYLLMLAYACVTMLRWDCTKSQGAVGLAGVLLVALSVASGLGLCSLLGIS.

The Extracellular segment spans residues 1-197 (SLLQGGSAYL…LNDIMKSFSD (197 aa)). Residues N147 and N175 are each glycosylated (N-linked (GlcNAc...) asparagine). Residues 198 to 218 (VSVIRVAGGYLLMLAYACVTM) traverse the membrane as a helical segment. The SSD domain maps to 199–255 (SVIRVAGGYLLMLAYACVTMLRWDCTKSQGAVGLAGVLLVALSVASGLGLCSLLGIS). The Cytoplasmic portion of the chain corresponds to 219–227 (LRWDCTKSQ). Residues 228 to 248 (GAVGLAGVLLVALSVASGLGL) traverse the membrane as a helical segment. The Extracellular portion of the chain corresponds to 249–255 (CSLLGIS).

The protein belongs to the patched family. In the eye, detected in neural retina, iris, retinal pigment epithelium, but not in lens.

Its subcellular location is the membrane. May act as a receptor for sonic hedgehog (SHH). This chain is Protein patched homolog 2 (PTC2), found in Cynops pyrrhogaster (Japanese fire-bellied newt).